The chain runs to 279 residues: 4-hydroxy-3-methylbut-2-enyl diphosphate reductase (279 aa).

C12 contributes to the [4Fe-4S] cluster binding site. (2E)-4-hydroxy-3-methylbut-2-enyl diphosphate-binding residues include H36 and H70. The dimethylallyl diphosphate site is built by H36 and H70. 2 residues coordinate isopentenyl diphosphate: H36 and H70. C92 serves as a coordination point for [4Fe-4S] cluster. Position 120 (H120) interacts with (2E)-4-hydroxy-3-methylbut-2-enyl diphosphate. H120 is a binding site for dimethylallyl diphosphate. H120 provides a ligand contact to isopentenyl diphosphate. E122 functions as the Proton donor in the catalytic mechanism. T158 contributes to the (2E)-4-hydroxy-3-methylbut-2-enyl diphosphate binding site. Residue C186 coordinates [4Fe-4S] cluster. Residues S214, S215, N216, and S258 each contribute to the (2E)-4-hydroxy-3-methylbut-2-enyl diphosphate site. Dimethylallyl diphosphate-binding residues include S214, S215, N216, and S258. Positions 214, 215, 216, and 258 each coordinate isopentenyl diphosphate.

The protein belongs to the IspH family. Requires [4Fe-4S] cluster as cofactor.

The catalysed reaction is isopentenyl diphosphate + 2 oxidized [2Fe-2S]-[ferredoxin] + H2O = (2E)-4-hydroxy-3-methylbut-2-enyl diphosphate + 2 reduced [2Fe-2S]-[ferredoxin] + 2 H(+). The enzyme catalyses dimethylallyl diphosphate + 2 oxidized [2Fe-2S]-[ferredoxin] + H2O = (2E)-4-hydroxy-3-methylbut-2-enyl diphosphate + 2 reduced [2Fe-2S]-[ferredoxin] + 2 H(+). It participates in isoprenoid biosynthesis; dimethylallyl diphosphate biosynthesis; dimethylallyl diphosphate from (2E)-4-hydroxy-3-methylbutenyl diphosphate: step 1/1. It functions in the pathway isoprenoid biosynthesis; isopentenyl diphosphate biosynthesis via DXP pathway; isopentenyl diphosphate from 1-deoxy-D-xylulose 5-phosphate: step 6/6. Its function is as follows. Catalyzes the conversion of 1-hydroxy-2-methyl-2-(E)-butenyl 4-diphosphate (HMBPP) into a mixture of isopentenyl diphosphate (IPP) and dimethylallyl diphosphate (DMAPP). Acts in the terminal step of the DOXP/MEP pathway for isoprenoid precursor biosynthesis. The sequence is that of 4-hydroxy-3-methylbut-2-enyl diphosphate reductase from Campylobacter fetus subsp. fetus (strain 82-40).